The chain runs to 592 residues: Aspartate--tRNA ligase (592 aa).

Glutamate 176 serves as a coordination point for L-aspartate. Residues 200 to 203 (QIFK) form an aspartate region. Arginine 222 contributes to the L-aspartate binding site. Residues 222 to 224 (RDE) and glutamine 231 each bind ATP. Position 450 (histidine 450) interacts with L-aspartate. Glutamate 484 serves as a coordination point for ATP. Arginine 491 provides a ligand contact to L-aspartate. 536–539 (GLDR) lines the ATP pocket.

Belongs to the class-II aminoacyl-tRNA synthetase family. Type 1 subfamily. In terms of assembly, homodimer.

Its subcellular location is the cytoplasm. The enzyme catalyses tRNA(Asp) + L-aspartate + ATP = L-aspartyl-tRNA(Asp) + AMP + diphosphate. Catalyzes the attachment of L-aspartate to tRNA(Asp) in a two-step reaction: L-aspartate is first activated by ATP to form Asp-AMP and then transferred to the acceptor end of tRNA(Asp). The chain is Aspartate--tRNA ligase from Macrococcus caseolyticus (strain JCSC5402) (Macrococcoides caseolyticum).